Consider the following 497-residue polypeptide: Glycerol kinase (497 aa).

T12 is an ADP binding site. ATP is bound by residues T12, T13, and S14. T12 lines the sn-glycerol 3-phosphate pocket. An ADP-binding site is contributed by R16. Residues R82, E83, Y132, and D239 each coordinate sn-glycerol 3-phosphate. R82, E83, Y132, D239, and Q240 together coordinate glycerol. ADP is bound by residues T261 and G303. 4 residues coordinate ATP: T261, G303, Q307, and G402. Positions 402 and 406 each coordinate ADP.

It belongs to the FGGY kinase family. Homodimer.

The enzyme catalyses glycerol + ATP = sn-glycerol 3-phosphate + ADP + H(+). Its pathway is polyol metabolism; glycerol degradation via glycerol kinase pathway; sn-glycerol 3-phosphate from glycerol: step 1/1. Its function is as follows. Key enzyme in the regulation of glycerol uptake and metabolism. Catalyzes the phosphorylation of glycerol to yield sn-glycerol 3-phosphate. Can utilize other nucleoside triphosphates (GTP, CTP, UTP and ITP) as a phosphoryl donor. The polypeptide is Glycerol kinase (Thermococcus kodakarensis (strain ATCC BAA-918 / JCM 12380 / KOD1) (Pyrococcus kodakaraensis (strain KOD1))).